The sequence spans 683 residues: Tripartite terminase subunit 3 (683 aa).

The Walker A motif signature appears at 217 to 224 (IPRRHGKT). The short motif at 312-317 (LLYIDE) is the Walker B motif element. Catalysis depends on Glu-317, which acts as the For ATPase activity. Active-site for nuclease activity residues include Asp-472, Glu-546, and Asp-658.

This sequence belongs to the herpesviridae TRM3 protein family. In terms of assembly, interacts with the terminase subunits TRM1 and TRM2. Interacts with portal protein.

The protein resides in the host nucleus. In terms of biological role, component of the molecular motor that translocates viral genomic DNA in empty capsid during DNA packaging. Forms a tripartite terminase complex together with TRM1 and TRM2 in the host cytoplasm. Once the complex reaches the host nucleus, it interacts with the capsid portal vertex. This portal forms a ring in which genomic DNA is translocated into the capsid. TRM3 carries an RNase H-like nuclease activity that plays an important role for the cleavage of concatemeric viral DNA into unit length genomes. This is Tripartite terminase subunit 3 from Saimiri sciureus (Common squirrel monkey).